A 24-amino-acid chain; its full sequence is Conotoxin PIVE (24 aa).

Disulfide bonds link cysteine 2-cysteine 10, cysteine 3-cysteine 15, and cysteine 13-cysteine 19. The residue at position 24 (lysine 24) is a Lysine amide.

It belongs to the conotoxin A superfamily. Expressed by the venom duct.

It is found in the secreted. Its function is as follows. Probable neurotoxin with ion channel inhibitor activity. In vivo, elicits dose-dependently excitatory activity upon injection into fish. Its action is slowly reversible. This chain is Conotoxin PIVE, found in Conus purpurascens (Purple cone).